The following is a 122-amino-acid chain: Large ribosomal subunit protein bL12 (122 aa).

Belongs to the bacterial ribosomal protein bL12 family. Homodimer. Part of the ribosomal stalk of the 50S ribosomal subunit. Forms a multimeric L10(L12)X complex, where L10 forms an elongated spine to which 2 to 4 L12 dimers bind in a sequential fashion. Binds GTP-bound translation factors.

Functionally, forms part of the ribosomal stalk which helps the ribosome interact with GTP-bound translation factors. Is thus essential for accurate translation. The polypeptide is Large ribosomal subunit protein bL12 (Levilactobacillus brevis (strain ATCC 367 / BCRC 12310 / CIP 105137 / JCM 1170 / LMG 11437 / NCIMB 947 / NCTC 947) (Lactobacillus brevis)).